A 298-amino-acid polypeptide reads, in one-letter code: ATP synthase gamma chain (298 aa).

Belongs to the ATPase gamma chain family. As to quaternary structure, F-type ATPases have 2 components, CF(1) - the catalytic core - and CF(0) - the membrane proton channel. CF(1) has five subunits: alpha(3), beta(3), gamma(1), delta(1), epsilon(1). CF(0) has three main subunits: a, b and c.

The protein resides in the cell inner membrane. Its function is as follows. Produces ATP from ADP in the presence of a proton gradient across the membrane. The gamma chain is believed to be important in regulating ATPase activity and the flow of protons through the CF(0) complex. This chain is ATP synthase gamma chain, found in Francisella tularensis subsp. holarctica (strain LVS).